Here is a 645-residue protein sequence, read N- to C-terminus: Glucans biosynthesis glucosyltransferase H (645 aa).

The segment covering 1–13 has biased composition (polar residues); sequence MDGTVTPSPTTTA. A disordered region spans residues 1 to 32; the sequence is MDGTVTPSPTTTAMPPVSALDAGTPTLPPEAP. The next 7 helical transmembrane spans lie at 64 to 84, 98 to 118, 423 to 443, 465 to 485, 504 to 524, 559 to 579, and 580 to 600; these read LIGG…SVLW, LFVL…AGFV, APMW…GGGI, AIWI…LGYI, AVSI…VMYL, YGGL…VSPA, and LAAW…VVAL.

Belongs to the glycosyltransferase 2 family. OpgH subfamily.

The protein localises to the cell inner membrane. It functions in the pathway glycan metabolism; osmoregulated periplasmic glucan (OPG) biosynthesis. In terms of biological role, involved in the biosynthesis of osmoregulated periplasmic glucans (OPGs). This is Glucans biosynthesis glucosyltransferase H from Xanthomonas euvesicatoria pv. vesicatoria (strain 85-10) (Xanthomonas campestris pv. vesicatoria).